The sequence spans 70 residues: Delta-hexatoxin-Mg1b (70 aa).

Positions 1–26 are cleaved as a signal peptide; the sequence is MKILEKALLENDSAAEEESRNLRTKR. Intrachain disulfides connect Cys-27–Cys-41, Cys-34–Cys-46, Cys-40–Cys-57, and Cys-42–Cys-68.

As to expression, expressed by the venom gland.

It is found in the secreted. Functionally, inhibits tetrodotoxin-sensitive sodium channels (Nav). Intracranial injection into mice causes strong convulsions and death. Intrathorax injection into crickets causes paralysis prolonged for 2 minutes, followed by recovery. The sequence is that of Delta-hexatoxin-Mg1b from Macrothele gigas (Japanese funnel web spider).